Reading from the N-terminus, the 121-residue chain is Large ribosomal subunit protein bL20 (121 aa).

Belongs to the bacterial ribosomal protein bL20 family.

Binds directly to 23S ribosomal RNA and is necessary for the in vitro assembly process of the 50S ribosomal subunit. It is not involved in the protein synthesizing functions of that subunit. This chain is Large ribosomal subunit protein bL20, found in Methylorubrum populi (strain ATCC BAA-705 / NCIMB 13946 / BJ001) (Methylobacterium populi).